The sequence spans 386 residues: Alanine racemase (386 aa).

Residue Lys-38 is the Proton acceptor; specific for D-alanine of the active site. Lys-38 carries the post-translational modification N6-(pyridoxal phosphate)lysine. Arg-136 contacts substrate. The active-site Proton acceptor; specific for L-alanine is Tyr-267. Met-315 lines the substrate pocket.

It belongs to the alanine racemase family. The cofactor is pyridoxal 5'-phosphate.

It carries out the reaction L-alanine = D-alanine. The protein operates within amino-acid biosynthesis; D-alanine biosynthesis; D-alanine from L-alanine: step 1/1. Catalyzes the interconversion of L-alanine and D-alanine. May also act on other amino acids. The polypeptide is Alanine racemase (alr) (Clostridium perfringens (strain ATCC 13124 / DSM 756 / JCM 1290 / NCIMB 6125 / NCTC 8237 / Type A)).